We begin with the raw amino-acid sequence, 341 residues long: 1-aminocyclopropane-1-carboxylate deaminase (341 aa).

N-acetylserine is present on Ser1. The residue at position 51 (Lys51) is an N6-(pyridoxal phosphate)lysine. Catalysis depends on Ser78, which acts as the Nucleophile.

This sequence belongs to the ACC deaminase/D-cysteine desulfhydrase family. In terms of assembly, homodimer. Pyridoxal 5'-phosphate serves as cofactor.

It catalyses the reaction 1-aminocyclopropane-1-carboxylate + H2O = 2-oxobutanoate + NH4(+). In terms of biological role, catalyzes a cyclopropane ring-opening reaction, the irreversible conversion of 1-aminocyclopropane-1-carboxylate (ACC) to ammonia and alpha-ketobutyrate. The chain is 1-aminocyclopropane-1-carboxylate deaminase from Cyberlindnera saturnus (Yeast).